Consider the following 1359-residue polypeptide: Tripeptidyl-peptidase 2 (1359 aa).

The interval 45-81 (AASTTTRGGPSPSAGVAPRAMPSSSSSPPSAAEGTTA) is disordered. The span at 64–81 (AMPSSSSSPPSAAEGTTA) shows a compositional bias: low complexity. The region spanning 102-600 (EIGVDRFLAA…HGLLQVDRAF (499 aa)) is the Peptidase S8 domain. Residues Asp126, His353, and Ser539 each act as charge relay system in the active site.

The protein belongs to the peptidase S8 family.

The catalysed reaction is Release of an N-terminal tripeptide from a polypeptide.. Functionally, serine protease that may function in the proteasome pathway. The protein is Tripeptidyl-peptidase 2 (TPP2) of Oryza sativa subsp. japonica (Rice).